We begin with the raw amino-acid sequence, 379 residues long: Ribosomal RNA large subunit methyltransferase G (379 aa).

Belongs to the methyltransferase superfamily. RlmG family.

Its subcellular location is the cytoplasm. The enzyme catalyses guanosine(1835) in 23S rRNA + S-adenosyl-L-methionine = N(2)-methylguanosine(1835) in 23S rRNA + S-adenosyl-L-homocysteine + H(+). Its function is as follows. Specifically methylates the guanine in position 1835 (m2G1835) of 23S rRNA. This is Ribosomal RNA large subunit methyltransferase G from Serratia proteamaculans (strain 568).